Reading from the N-terminus, the 307-residue chain is Ribosomal RNA small subunit methyltransferase H (307 aa).

Residues 34-36, Asp53, Leu88, Asp102, and Gln109 contribute to the S-adenosyl-L-methionine site; that span reads GGH.

It belongs to the methyltransferase superfamily. RsmH family.

The protein localises to the cytoplasm. The enzyme catalyses cytidine(1402) in 16S rRNA + S-adenosyl-L-methionine = N(4)-methylcytidine(1402) in 16S rRNA + S-adenosyl-L-homocysteine + H(+). In terms of biological role, specifically methylates the N4 position of cytidine in position 1402 (C1402) of 16S rRNA. This Sulfurimonas denitrificans (strain ATCC 33889 / DSM 1251) (Thiomicrospira denitrificans (strain ATCC 33889 / DSM 1251)) protein is Ribosomal RNA small subunit methyltransferase H.